Consider the following 461-residue polypeptide: Signal recognition particle receptor FtsY (461 aa).

Residues 105-138 (FESLYNVAKIYHQLEKPDKALEYAQRAEKLVPYE) form a TPR repeat. GTP is bound by residues 267–274 (GVNGSGKT), 349–353 (DTAGR), and 413–416 (TKLD).

This sequence belongs to the GTP-binding SRP family. FtsY subfamily. In terms of assembly, part of the signal recognition particle protein translocation system, which is composed of SRP and FtsY.

Its subcellular location is the cell inner membrane. It is found in the cytoplasm. It catalyses the reaction GTP + H2O = GDP + phosphate + H(+). In terms of biological role, involved in targeting and insertion of nascent membrane proteins into the cytoplasmic membrane. Acts as a receptor for the complex formed by the signal recognition particle (SRP) and the ribosome-nascent chain (RNC). The polypeptide is Signal recognition particle receptor FtsY (Aquifex aeolicus (strain VF5)).